We begin with the raw amino-acid sequence, 408 residues long: Histidine--tRNA ligase (408 aa).

Belongs to the class-II aminoacyl-tRNA synthetase family. Homodimer.

Its subcellular location is the cytoplasm. It catalyses the reaction tRNA(His) + L-histidine + ATP = L-histidyl-tRNA(His) + AMP + diphosphate + H(+). In Wolbachia pipientis wMel, this protein is Histidine--tRNA ligase.